A 649-amino-acid chain; its full sequence is DNA topoisomerase 3 (649 aa).

Residues 1-134 form the Toprim domain; that stretch reads MRLFIAEKPS…KRQQVRRCLI (134 aa). Residues E7, D103, and D105 each contribute to the Mg(2+) site. Positions 155 to 603 constitute a Topo IA-type catalytic domain; sequence FVPLCVSALA…PLVGTLYQLI (449 aa). The segment at 194–199 is interaction with DNA; it reads SVGRVQ. Residue Y328 is the O-(5'-phospho-DNA)-tyrosine intermediate of the active site. Residues 614–649 are disordered; that stretch reads FRGIVAPGGGDKKKSAPRKRAGKKSPPAAETGRQTE.

This sequence belongs to the type IA topoisomerase family. Requires Mg(2+) as cofactor.

It carries out the reaction ATP-independent breakage of single-stranded DNA, followed by passage and rejoining.. In terms of biological role, releases the supercoiling and torsional tension of DNA, which is introduced during the DNA replication and transcription, by transiently cleaving and rejoining one strand of the DNA duplex. Introduces a single-strand break via transesterification at a target site in duplex DNA. The scissile phosphodiester is attacked by the catalytic tyrosine of the enzyme, resulting in the formation of a DNA-(5'-phosphotyrosyl)-enzyme intermediate and the expulsion of a 3'-OH DNA strand. The free DNA strand then undergoes passage around the unbroken strand, thus removing DNA supercoils. Finally, in the religation step, the DNA 3'-OH attacks the covalent intermediate to expel the active-site tyrosine and restore the DNA phosphodiester backbone. This Salmonella typhimurium (strain LT2 / SGSC1412 / ATCC 700720) protein is DNA topoisomerase 3.